A 196-amino-acid polypeptide reads, in one-letter code: Probable malonic semialdehyde reductase RutE (196 aa).

Belongs to the nitroreductase family. HadB/RutE subfamily. The cofactor is FMN.

It carries out the reaction 3-hydroxypropanoate + NADP(+) = 3-oxopropanoate + NADPH + H(+). In terms of biological role, may reduce toxic product malonic semialdehyde to 3-hydroxypropionic acid, which is excreted. The polypeptide is Probable malonic semialdehyde reductase RutE (Klebsiella pneumoniae subsp. pneumoniae (strain ATCC 700721 / MGH 78578)).